A 790-amino-acid chain; its full sequence is Endonuclease MutS2 (790 aa).

Residue 334–341 (GPNTGGKT) participates in ATP binding. Residues 713 to 788 (LDVRGMTLDD…GDGVTIVELH (76 aa)) form the Smr domain.

It belongs to the DNA mismatch repair MutS family. MutS2 subfamily. Homodimer. Binds to stalled ribosomes, contacting rRNA.

Its function is as follows. Endonuclease that is involved in the suppression of homologous recombination and thus may have a key role in the control of bacterial genetic diversity. In terms of biological role, acts as a ribosome collision sensor, splitting the ribosome into its 2 subunits. Detects stalled/collided 70S ribosomes which it binds and splits by an ATP-hydrolysis driven conformational change. Acts upstream of the ribosome quality control system (RQC), a ribosome-associated complex that mediates the extraction of incompletely synthesized nascent chains from stalled ribosomes and their subsequent degradation. Probably generates substrates for RQC. This chain is Endonuclease MutS2, found in Caldanaerobacter subterraneus subsp. tengcongensis (strain DSM 15242 / JCM 11007 / NBRC 100824 / MB4) (Thermoanaerobacter tengcongensis).